A 219-amino-acid polypeptide reads, in one-letter code: uncharacterized protein (219 aa).

One can recognise an RRM domain in the interval 30–107 (FRLFVGNLGN…RPVKLSRATS (78 aa)). Positions 140–149 (KKIKNKHGKN) are enriched in basic residues. Positions 140–219 (KKIKNKHGKN…YSRASSFRRV (80 aa)) are disordered. The span at 150-169 (SSKSSRAAQSAAAELISSSS) shows a compositional bias: low complexity. Polar residues predominate over residues 176–186 (ANSTSVPNAVN).

This is an uncharacterized protein from Schizosaccharomyces pombe (strain 972 / ATCC 24843) (Fission yeast).